Reading from the N-terminus, the 295-residue chain is Protein gurken (295 aa).

Positions 1–26 are cleaved as a signal peptide; the sequence is MMQIPFTRIFKVIFVLSTIVAVTDCC. At 27–247 the chain is on the extracellular side; that stretch reads SSRILLLREH…TAQRKVRMAH (221 aa). 2 disordered regions span residues 78–111 and 124–175; these read EASA…SIAA and TDTW…NDKE. Over residues 124–139 the composition is skewed to polar residues; sequence TDTWLASESSTPITDS. 2 stretches are compositionally biased toward low complexity: residues 140-152 and 159-171; these read ETVT…THTG and SSSS…TPSP. Residues 179–224 enclose the EGF-like domain; that stretch reads QMLPCSEAYNTSFCLNGGHCFQHPMVNNTVFHSCLCVNDYDGERCA. 3 cysteine pairs are disulfide-bonded: Cys-183-Cys-198, Cys-192-Cys-212, and Cys-214-Cys-223. N-linked (GlcNAc...) asparagine glycans are attached at residues Asn-188 and Asn-205. The tract at residues 215–245 is interaction with cni; sequence VNDYDGERCAYKSWNGDYIYSPPTAQRKVRM. Residues 248-268 form a helical membrane-spanning segment; the sequence is IVFSFPVLLMLSSLYVLFAAV. Residues 269 to 295 are Cytoplasmic-facing; the sequence is FMLRNVPDYRRKQQQLHLHKQRFFVRC.

As to quaternary structure, interacts with cni. As to expression, expressed in nurse cells and oocyte up to oogenesis stage 7. Specifically accumulates in dorsal anterior corner of the oocyte during stages 9/10, at later stages expression is seen as an anterior ring. In stage 10 ovaries, it is concentrated between the oocyte nucleus and the adjacent oolemma. During vitellogenesis stage it can be detected at the oocyte surface, especially on the microvilli. It is also found at the microvilli covering the apical surface of the follicular epithelium and within follicle cells.

It is found in the cell membrane. Its function is as follows. Critical for defining the anterior-posterior and dorsal-ventral axes of the egg. May signal directly to dorsal follicle cells through the receptor torpedo (top). During oogenesis this signaling pathway instructs follicle cells to follow a dorsal pathway of development rather than the default ventral pathway. This chain is Protein gurken (grk), found in Drosophila melanogaster (Fruit fly).